Consider the following 241-residue polypeptide: 2,3-bisphosphoglycerate-dependent phosphoglycerate mutase (241 aa).

His12 serves as the catalytic Tele-phosphohistidine intermediate. Residues Ser24–Gly25, Arg61, Glu117–Tyr120, and Lys128 contribute to the substrate site. Glu117 (proton donor/acceptor) is an active-site residue.

It belongs to the phosphoglycerate mutase family. BPG-dependent PGAM subfamily.

It catalyses the reaction (2R)-2-phosphoglycerate = (2R)-3-phosphoglycerate. It functions in the pathway carbohydrate degradation; glycolysis; pyruvate from D-glyceraldehyde 3-phosphate: step 3/5. In terms of biological role, catalyzes the interconversion of 2-phosphoglycerate and 3-phosphoglycerate. The protein is 2,3-bisphosphoglycerate-dependent phosphoglycerate mutase of Methanosarcina mazei (strain ATCC BAA-159 / DSM 3647 / Goe1 / Go1 / JCM 11833 / OCM 88) (Methanosarcina frisia).